The following is a 138-amino-acid chain: Spermatid nuclear transition protein 4 (138 aa).

The segment covering 1–11 (AKVSRKPREPR) has biased composition (basic and acidic residues). The interval 1-138 (AKVSRKPREP…QGVTRRGRRY (138 aa)) is disordered. Residue serine 4 is modified to Phosphoserine; by PKC. Residues 5–23 (RKPREPRTAVTQSTRRIKR) carry the Nuclear localization signal motif. Composition is skewed to basic residues over residues 19–34 (RRIK…RSRG), 43–57 (MKIK…RRKI), and 65–74 (KKAKKARKHF). Threonine 26 is subject to Phosphothreonine; by PKA. Residues 54–72 (RRKIQTSAGQPKKAKKARK) carry the Nuclear localization signal motif. The span at 86-101 (NKKTNQNKRQNQNKRQ) shows a compositional bias: low complexity. Residues 120-131 (PTTSCKWCSQGV) show a composition bias toward polar residues.

The protein localises to the nucleus. It localises to the chromosome. Functionally, involved in nuclear basic protein transition: histones are replaced by spermatid specific proteins which are themselves replaced by protamines in late spermatids. The chain is Spermatid nuclear transition protein 4 (TNP4) from Sus scrofa (Pig).